Consider the following 485-residue polypeptide: UDP-N-acetylmuramoyl-L-alanyl-D-glutamate--2,6-diaminopimelate ligase (485 aa).

Residue Ser30 participates in UDP-N-acetyl-alpha-D-muramoyl-L-alanyl-D-glutamate binding. 111–117 contributes to the ATP binding site; the sequence is GTNGKTT. UDP-N-acetyl-alpha-D-muramoyl-L-alanyl-D-glutamate contacts are provided by residues 153-154, Ser180, Gln186, and Arg188; that span reads TT. Lys220 is subject to N6-carboxylysine. Meso-2,6-diaminopimelate-binding positions include Arg378, 402–405, Gly455, and Glu459; that span reads DNPR. A Meso-diaminopimelate recognition motif motif is present at residues 402 to 405; that stretch reads DNPR.

It belongs to the MurCDEF family. MurE subfamily. The cofactor is Mg(2+). Carboxylation is probably crucial for Mg(2+) binding and, consequently, for the gamma-phosphate positioning of ATP.

The protein resides in the cytoplasm. It catalyses the reaction UDP-N-acetyl-alpha-D-muramoyl-L-alanyl-D-glutamate + meso-2,6-diaminopimelate + ATP = UDP-N-acetyl-alpha-D-muramoyl-L-alanyl-gamma-D-glutamyl-meso-2,6-diaminopimelate + ADP + phosphate + H(+). Its pathway is cell wall biogenesis; peptidoglycan biosynthesis. Its function is as follows. Catalyzes the addition of meso-diaminopimelic acid to the nucleotide precursor UDP-N-acetylmuramoyl-L-alanyl-D-glutamate (UMAG) in the biosynthesis of bacterial cell-wall peptidoglycan. The protein is UDP-N-acetylmuramoyl-L-alanyl-D-glutamate--2,6-diaminopimelate ligase of Bacteroides fragilis (strain ATCC 25285 / DSM 2151 / CCUG 4856 / JCM 11019 / LMG 10263 / NCTC 9343 / Onslow / VPI 2553 / EN-2).